A 43-amino-acid chain; its full sequence is uncharacterized protein (43 aa).

Composition is skewed to polar residues over residues 1–19 (MSQK…SGAS) and 33–43 (PENSISKTFSK). The disordered stretch occupies residues 1–43 (MSQKLSFFQQNTRNGSGASRTLVIKPPTIQPKPENSISKTFSK).

This is an uncharacterized protein from Dictyostelium discoideum (Social amoeba).